The primary structure comprises 155 residues: Small ribosomal subunit protein uS7 (155 aa).

It belongs to the universal ribosomal protein uS7 family. As to quaternary structure, part of the 30S ribosomal subunit. Contacts proteins S9 and S11.

One of the primary rRNA binding proteins, it binds directly to 16S rRNA where it nucleates assembly of the head domain of the 30S subunit. Is located at the subunit interface close to the decoding center, probably blocks exit of the E-site tRNA. The chain is Small ribosomal subunit protein uS7 from Thermotoga petrophila (strain ATCC BAA-488 / DSM 13995 / JCM 10881 / RKU-1).